We begin with the raw amino-acid sequence, 361 residues long: Histidinol-phosphate aminotransferase (361 aa).

K219 is modified (N6-(pyridoxal phosphate)lysine).

The protein belongs to the class-II pyridoxal-phosphate-dependent aminotransferase family. Histidinol-phosphate aminotransferase subfamily. In terms of assembly, homodimer. Requires pyridoxal 5'-phosphate as cofactor.

The catalysed reaction is L-histidinol phosphate + 2-oxoglutarate = 3-(imidazol-4-yl)-2-oxopropyl phosphate + L-glutamate. Its pathway is amino-acid biosynthesis; L-histidine biosynthesis; L-histidine from 5-phospho-alpha-D-ribose 1-diphosphate: step 7/9. The polypeptide is Histidinol-phosphate aminotransferase (Acinetobacter baumannii (strain SDF)).